The sequence spans 139 residues: MPTINQLVRKGRKSHKGKSKSPALGYVYNTFKKEEIKTPSPQKRGVATRVGTMTPKKPNSALRKYARVRLSNLIEVTAYIPGIGHNLQEHSVVLIRGGRVKDLPGVRYHIIRGTLDTAGVEGRMQSRSKYGAKKPKNKK.

2 disordered regions span residues 1 to 22 and 37 to 57; these read MPTINQLVRKGRKSHKGKSKSP and KTPSPQKRGVATRVGTMTPKK. A compositionally biased stretch (basic residues) spans 9 to 19; it reads RKGRKSHKGKS. The residue at position 102 (D102) is a 3-methylthioaspartic acid.

It belongs to the universal ribosomal protein uS12 family. As to quaternary structure, part of the 30S ribosomal subunit. Contacts proteins S8 and S17. May interact with IF1 in the 30S initiation complex.

In terms of biological role, with S4 and S5 plays an important role in translational accuracy. Interacts with and stabilizes bases of the 16S rRNA that are involved in tRNA selection in the A site and with the mRNA backbone. Located at the interface of the 30S and 50S subunits, it traverses the body of the 30S subunit contacting proteins on the other side and probably holding the rRNA structure together. The combined cluster of proteins S8, S12 and S17 appears to hold together the shoulder and platform of the 30S subunit. The chain is Small ribosomal subunit protein uS12 from Limosilactobacillus reuteri (strain DSM 20016) (Lactobacillus reuteri).